The chain runs to 463 residues: Dipeptidyl peptidase 1 (463 aa).

An N-terminal signal peptide occupies residues 1–24; it reads MGPWSGSRLVALLLLVYGAGSVRG. Residues asparagine 29 and asparagine 53 are each glycosylated (N-linked (GlcNAc...) asparagine). 2 cysteine pairs are disulfide-bonded: cysteine 30-cysteine 118 and cysteine 54-cysteine 136. The propeptide occupies 135–230; that stretch reads ACFTGRKTGN…TAEIQKKILH (96 aa). N-linked (GlcNAc...) asparagine glycosylation occurs at asparagine 144. 3 cysteine pairs are disulfide-bonded: cysteine 255-cysteine 298, cysteine 291-cysteine 331, and cysteine 321-cysteine 337. Cysteine 258 is an active-site residue. A glycan (N-linked (GlcNAc...) asparagine) is linked at asparagine 276. Phenylalanine 302 and tyrosine 304 together coordinate chloride. Tyrosine 347 serves as a coordination point for chloride. Active-site residues include histidine 405 and asparagine 427.

This sequence belongs to the peptidase C1 family. Tetramer of heterotrimers consisting of exclusion domain, heavy- and light chains. Chloride is required as a cofactor.

The protein localises to the lysosome. It catalyses the reaction Release of an N-terminal dipeptide, Xaa-Yaa-|-Zaa-, except when Xaa is Arg or Lys, or Yaa or Zaa is Pro.. In terms of biological role, thiol protease. Has dipeptidylpeptidase activity. Active against a broad range of dipeptide substrates composed of both polar and hydrophobic amino acids. Proline cannot occupy the P1 position and arginine cannot occupy the P2 position of the substrate. Can act as both an exopeptidase and endopeptidase. Activates serine proteases such as elastase, cathepsin G and granzymes A and B. The polypeptide is Dipeptidyl peptidase 1 (CTSC) (Bos taurus (Bovine)).